The following is a 348-amino-acid chain: MRIEQELKLGFKDVLFRPKRSTLKSRSQVNLTRDFTFKHSGRQWSGVPVIAANMDSVGSFEMAKALAEHGVMTAVHKHYTVNDWADFVKSADNATLKNVMVSTGTSDADFQKTKDIMALSDELIFICVDIANGYSEHLVEYVERVRAEFPDKVISAGNVVTGDMCEELILAGADIVKVGIGPGSVCTTRVKTGVGYPQLSAIIECGDAAHGLGGMIIGDGGCSCAGDVSKAFGGGADFVMLGGMLAGHEESGGEIIEKDGETFMKFYGMSSQSAMDKHSGGVAKYRAAEGKTVLLPFRGSVHGTISDILGGVRSTCTYVGAAKLKELTKRTTFIRVQEQENNVFGKEK.

108–131 (ADFQKTKDIMALSDELIFICVDIA) contributes to the NADP(+) binding site. Positions 181 and 183 each coordinate K(+). Cys-186 acts as the Thioimidate intermediate in catalysis. Residue 216-239 (IIGDGGCSCAGDVSKAFGGGADFV) coordinates NADP(+).

The protein belongs to the IMPDH/GMPR family. GuaC type 1 subfamily. As to quaternary structure, homotetramer.

The catalysed reaction is IMP + NH4(+) + NADP(+) = GMP + NADPH + 2 H(+). In terms of biological role, catalyzes the irreversible NADPH-dependent deamination of GMP to IMP. It functions in the conversion of nucleobase, nucleoside and nucleotide derivatives of G to A nucleotides, and in maintaining the intracellular balance of A and G nucleotides. This is GMP reductase from Vibrio parahaemolyticus serotype O3:K6 (strain RIMD 2210633).